We begin with the raw amino-acid sequence, 352 residues long: Endoplasmic reticulum GDP-fucose transporter (352 aa).

A run of 10 helical transmembrane segments spans residues 9–29 (LGML…ELII), 34–54 (GAGN…GLVF), 70–90 (YVIL…AFNF), 96–116 (LHMI…IVLL), 126–146 (SSVA…SGDV), 163–183 (FFWW…TAYM), 201–221 (ALFF…GNIV), 249–271 (LMLF…VYVL), 276–298 (ASLT…SIIY), and 305–325 (LNHW…ANVI). Residues 350–352 (KVE) carry the Prevents secretion from ER motif.

This sequence belongs to the nucleotide-sugar transporter family. SLC35B subfamily.

The protein resides in the endoplasmic reticulum membrane. In terms of biological role, sugar transporter that specifically mediates the transport of UDP-N-acetylglucosamine (UDP-GlcNAc), GDP-fucose and UDP-xylose. Functions redundantly with Gfr in the O-fucosylation of Notch, positively regulating Notch signaling. Involved in the biosynthesis of heparan sulfate-glycosaminoglycan (HS-GAG) and in Dpp signaling in the wing imaginal disk. The sequence is that of Endoplasmic reticulum GDP-fucose transporter from Drosophila melanogaster (Fruit fly).